Reading from the N-terminus, the 315-residue chain is Thioredoxin reductase (315 aa).

Residue 45-52 (EGSTPGGK) coordinates FAD. A disulfide bridge links Cys-145 with Cys-148. Residue 288 to 297 (DCRSKHFRQI) participates in FAD binding.

This sequence belongs to the class-II pyridine nucleotide-disulfide oxidoreductase family. In terms of assembly, homodimer. FAD is required as a cofactor.

It is found in the cytoplasm. The enzyme catalyses [thioredoxin]-dithiol + NADP(+) = [thioredoxin]-disulfide + NADPH + H(+). The chain is Thioredoxin reductase (trxB) from Mycoplasma pneumoniae (strain ATCC 29342 / M129 / Subtype 1) (Mycoplasmoides pneumoniae).